The sequence spans 391 residues: 3-ketoacyl-CoA thiolase (391 aa).

The Acyl-thioester intermediate role is filled by Cys95. Active-site proton acceptor residues include His347 and Cys377.

The protein belongs to the thiolase-like superfamily. Thiolase family. As to quaternary structure, heterotetramer of two alpha chains (FadB) and two beta chains (FadA).

The protein localises to the cytoplasm. The catalysed reaction is an acyl-CoA + acetyl-CoA = a 3-oxoacyl-CoA + CoA. It functions in the pathway lipid metabolism; fatty acid beta-oxidation. Its function is as follows. Catalyzes the final step of fatty acid oxidation in which acetyl-CoA is released and the CoA ester of a fatty acid two carbons shorter is formed. This is 3-ketoacyl-CoA thiolase from Pseudomonas savastanoi pv. phaseolicola (strain 1448A / Race 6) (Pseudomonas syringae pv. phaseolicola (strain 1448A / Race 6)).